The primary structure comprises 312 residues: Tumor necrosis factor receptor type 1-associated DEATH domain protein (312 aa).

Residues 147-163 (LRDEELTELENALRNLT) carry the Nuclear export signal motif. The interval 166-200 (SAGGQGSDVQGTPAPLQSLAPSPPEEKPPPPQPGQ) is disordered. In terms of domain architecture, Death spans 215 to 305 (NLQDQQKFAR…SLAEDLLGLA (91 aa)). The tract at residues 222–289 (FARSVGLKWR…ATLQRLVEAL (68 aa)) is interaction with KRT14 and KRT18. The Nuclear localization signal signature appears at 231–244 (RKVGRSLQRSCRAL).

Stimulation of TNF-alpha receptor TNFRSF1A leads to the formation of two distinct signaling complexes. Plasma membrane-bound complex I is composed of TNFRSF1A, TRADD, RIPK1, TRAF2 and BIRC2/c-IAP1 or BIRC3 which interacts with CHUCK/IKK-alpha, IKBKB/IKK-beta and IKBKG/IKK-gamma promoting cell survival. Subsequently, TRADD, RIPK1 and TRAF2 dissociate from TNFRSF1A and form cytoplasmic complex II with FADD and caspase CASP8 promoting cell apoptosis. Within complex I, interacts with TNFRSF1A/TNFR1, TRAF2 and kinase RIPK1. Within complex I, interacts with TRPC4AP; the interaction promotes NF-kappa B activation. UXT1 associates with complex I; the interaction prevents the formation of complex II. Within complex I Interacts with scaffold protein DAB2IP. Interacts with autophagy receptor SQSTM1. Interacts with E3 ligase TRIP12. Interacts with kinase HIPK2. Interacts with keratin KRT14. Interacts with keratin KRT18. Interacts with keratins KRT16 and KRT17. Interacts with FADD. Interacts with TOMM70. Interacts with TMC8; the interaction impairs the formation of complex I and facilites complex II formation.

It is found in the nucleus. It localises to the cytoplasm. Its subcellular location is the cytoskeleton. Functionally, adapter molecule for TNFRSF1A/TNFR1 that specifically associates with the cytoplasmic domain of activated TNFRSF1A/TNFR1 mediating its interaction with FADD. Overexpression of TRADD leads to two major TNF-induced responses, apoptosis and activation of NF-kappa-B. The nuclear form acts as a tumor suppressor by preventing ubiquitination and degradation of isoform p19ARF/ARF of CDKN2A by TRIP12: acts by interacting with TRIP12, leading to disrupt interaction between TRIP12 and isoform p19ARF/ARF of CDKN2A. The chain is Tumor necrosis factor receptor type 1-associated DEATH domain protein from Bos taurus (Bovine).